Reading from the N-terminus, the 333-residue chain is MNEVKSVGAKYIALTGPTASGKTAAAMAIAQQHDVEIISVDSALVYRGMDIGTAKPTVDELAAVPHHLINIRDPLQAYSAAEFVADAQRLIDDIAARGKLPLLVGGTMLYFKALFYGLDDMPKADPAVRAELASEAAAKGWPALHAELATVDPVTAARLAPHDSQRISRALEVFRVSGQPLSFFHQQNAAKTIADDGREERTEILISLEPQERSWLHHRIAERFDAMLAAGFVEEVKTLRARGDLTPDLPSMRCVGYRQAWELLDAQEARSPGGSFPMDELRDKGIIATRQLAKRQVTWLRSMPQRQIITCDTDQALPLVLQAVAQHIEKSSR.

16–23 lines the ATP pocket; that stretch reads GPTASGKT. 18–23 provides a ligand contact to substrate; it reads TASGKT. Interaction with substrate tRNA stretches follow at residues 41 to 44, 165 to 169, and 253 to 258; these read DSAL, QRISR, and RCVGYR.

The protein belongs to the IPP transferase family. As to quaternary structure, monomer. It depends on Mg(2+) as a cofactor.

It carries out the reaction adenosine(37) in tRNA + dimethylallyl diphosphate = N(6)-dimethylallyladenosine(37) in tRNA + diphosphate. Its function is as follows. Catalyzes the transfer of a dimethylallyl group onto the adenine at position 37 in tRNAs that read codons beginning with uridine, leading to the formation of N6-(dimethylallyl)adenosine (i(6)A). In Polaromonas sp. (strain JS666 / ATCC BAA-500), this protein is tRNA dimethylallyltransferase.